Here is a 1053-residue protein sequence, read N- to C-terminus: CRISPR-associated endonuclease Cas9 (1053 aa).

Residues 1–41 (MKRNYILGLDIGITSVGYGIIDYETRDVIDAGVRLFKEANV) form a ruvC-I region. Residue aspartate 10 is the For RuvC-like nuclease domain of the active site. Aspartate 10 contacts Mg(2+). The tract at residues 41 to 426 (VENNEGRRSK…IFNRLKLVPK (386 aa)) is recognition lobe. Residues 435–481 (EIPTTLVDDFILSPVVKRSFIQSIKVINAIIKKYGLPNDIIIELARE) are ruvC-II. Residues glutamate 477 and glutamate 481 each coordinate Mg(2+). Residues 480–646 (REKNSKDAQK…VQKDFINRNL (167 aa)) enclose the HNH Cas9-type domain. Catalysis depends on histidine 557, which acts as the Proton acceptor for HNH nuclease domain. Residues 650-775 (RYATRGLMNL…FKDYKYSHRV (126 aa)) form a ruvC-III region. Histidine 701 contacts Mg(2+). Tyrosine 789 contacts RNA. PAM substrate-binding regions lie at residues 882 to 889 (YYGNKLNA) and 985 to 993 (NNDLLNRIE). Residues 910-1053 (KPYRFDVYLD…KKHPQIIKKG (144 aa)) are PAM-interacting domain (PI).

This sequence belongs to the CRISPR-associated Cas9 family. Subtype II-A subfamily. In terms of assembly, monomer. Binds crRNA and tracrRNA. Mg(2+) is required as a cofactor.

Its function is as follows. CRISPR (clustered regularly interspaced short palindromic repeat) is an adaptive immune system that provides protection against mobile genetic elements (viruses, transposable elements and conjugative plasmids). CRISPR clusters contain spacers, sequences complementary to antecedent mobile elements, and target invading nucleic acids. CRISPR clusters are transcribed and processed into CRISPR RNA (crRNA). In type II CRISPR systems correct processing of pre-crRNA requires a trans-encoded small RNA (tracrRNA), endogenous ribonuclease 3 (rnc) and this protein. The tracrRNA serves as a guide for ribonuclease 3-aided processing of pre-crRNA. Subsequently Cas9/crRNA/tracrRNA endonucleolytically cleaves linear or circular dsDNA target complementary to the spacer; Cas9 is inactive in the absence of the 2 guide RNAs (gRNA). Cas9 recognizes the protospacer adjacent motif (PAM) in the CRISPR repeat sequences to help distinguish self versus nonself, as targets within the bacterial CRISPR locus do not have PAMs. PAM recognition is also required for catalytic activity. The sequence is that of CRISPR-associated endonuclease Cas9 from Staphylococcus aureus.